We begin with the raw amino-acid sequence, 202 residues long: Matrix protein (202 aa).

Positions 35–38 (PPEY) match the PPXY motif motif. The essential for glycoprotein binding stretch occupies residues 115-151 (KLRRTLIFQWADSRGPLEGEELEYSQEITWDDDTEFV).

The protein belongs to the lyssavirus matrix protein family. In terms of assembly, homomultimer. Interacts with nucleoprotein and with the cytoplasmic domain of glycoprotein. Interacts with host ATP6V1A; this interaction plays an important role in virion uncoating after viral entry.

It is found in the virion membrane. The protein resides in the host endomembrane system. The protein localises to the host cytoplasm. In terms of biological role, plays a major role in assembly, budding and uncoating of virion after membrane fusion. Completely covers the ribonucleoprotein coil and keep it in condensed bullet-shaped form. Inhibits viral transcription and stimulates replication. Plays a major role in early induction of TRAIL-mediated apoptosis in infected neurons. Inhibits the integrated stress response (ISR) in the infected cell by blocking the formation of stress granules. In Rabies virus (strain CVS-11) (RABV), this protein is Matrix protein (M).